The sequence spans 80 residues: Cell division activator CedA (80 aa).

Belongs to the CedA family.

Activates the cell division inhibited by chromosomal DNA over-replication. The sequence is that of Cell division activator CedA from Citrobacter koseri (strain ATCC BAA-895 / CDC 4225-83 / SGSC4696).